We begin with the raw amino-acid sequence, 305 residues long: tRNA-cytidine(32) 2-sulfurtransferase (305 aa).

A disordered region spans residues 1 to 20 (MTAVLPLPQPLADPAPRDPR). The PP-loop motif signature appears at 59 to 64 (SGGKDS). The [4Fe-4S] cluster site is built by Cys134, Cys137, and Cys225. The span at 282-293 (DAPSDVDPDPSA) shows a compositional bias: low complexity. Residues 282 to 305 (DAPSDVDPDPSAWLSASHAPHDSD) are disordered.

It belongs to the TtcA family. Homodimer. The cofactor is Mg(2+). Requires [4Fe-4S] cluster as cofactor.

Its subcellular location is the cytoplasm. The enzyme catalyses cytidine(32) in tRNA + S-sulfanyl-L-cysteinyl-[cysteine desulfurase] + AH2 + ATP = 2-thiocytidine(32) in tRNA + L-cysteinyl-[cysteine desulfurase] + A + AMP + diphosphate + H(+). It participates in tRNA modification. Functionally, catalyzes the ATP-dependent 2-thiolation of cytidine in position 32 of tRNA, to form 2-thiocytidine (s(2)C32). The sulfur atoms are provided by the cysteine/cysteine desulfurase (IscS) system. The chain is tRNA-cytidine(32) 2-sulfurtransferase from Xanthomonas euvesicatoria pv. vesicatoria (strain 85-10) (Xanthomonas campestris pv. vesicatoria).